We begin with the raw amino-acid sequence, 353 residues long: MANFGPKDIKKLREMTDAGMMDCKKALTEADGDMDKAVEWLRDQGMGAAAKKAGKVAAEGAIGIKVEGHKAVIVEINSQTDFVAQNDKFKALMDTVVNHAFENNLADAEAINNSTINGEPFADFLSQQIAIIGEKLVVRRAALIVGDETTAVNGYVHSNAQNGVIIEAKCDSAKTAEAMTPVLKEVAMHAAAMAPSTLSFKDFDPKFVEDETKGRIVAIETENEELRRLGKTEKNVPQYISMSQLTDEVMAAAEEALKAELAAEGKPEKIWDKILPGKLARFISDNTTLDQEQCLLDQKFVMDDSKTVFEYVQEKAKAAGGSAEIVHFVRLEVGEGIEVEEEDFAAEVAKQMA.

Residues 80 to 83 form an involved in Mg(2+) ion dislocation from EF-Tu region; it reads TDFV.

The protein belongs to the EF-Ts family.

The protein localises to the cytoplasm. In terms of biological role, associates with the EF-Tu.GDP complex and induces the exchange of GDP to GTP. It remains bound to the aminoacyl-tRNA.EF-Tu.GTP complex up to the GTP hydrolysis stage on the ribosome. The chain is Elongation factor Ts from Sulfurovum sp. (strain NBC37-1).